The primary structure comprises 190 residues: Capsid protein (190 aa).

The interval 1 to 20 (MTTSATGKALNRKQRRALNR) is disordered.

Belongs to the bromovirus capsid protein family.

It localises to the virion. Its function is as follows. Capsid protein. Probably binds RNA and plays a role in packaging. The polypeptide is Capsid protein (Broad bean mottle virus).